A 621-amino-acid polypeptide reads, in one-letter code: MDSHTLIQALIYLGAAALIVPIAVRLGLGSVLGYLIAGCIIGPWGLRLVTDAEAILHFAEIGVVLMLFVIGLELDPQRLWKLRASVFGGGALQMVACGVLIGLFCMLLGLRWQVAELIGMTLALSSTAIAMQAMNERNLTVSQMGRSAFAVLLFQDIAAIPLVAMIPLLAASGGATSLVAFALSALKVAAALALVVALGRYLTRPLLRFVARSGLREVFSAVALFLVFGFGLLLEEVGLSMAMGAFLAGVLLASSEYRHALESDIEPFKGLLLGLFFIGVGMSIDFGTLVTHPLRIVILLVGFLAIKMLMLWLIARPLGVPRAQRRWFAVLLGQGSEFAFVVFGAARMADVLDGEWAKALTLAVALSMAATPVLLVLLTRLEKSASGQARDADEIDEEQPRVIVAGFGRFGQIAGRLLLSSGVKMVILDHDPDHVDTLRKFDMKVFYGDATRVDLLESAGAEKAEVLINAIDDPHVSLELVERVKEHFPHLQIISRARDVDHYIKLRQAGVEAPERETFEAALKSGRMTLEALGLGAYEARERADLFRRFNLQMVEEMVAMAENDAASRVAVFKRTSDMLTGIINEDRHHLSLVQRHGWQGTEEGRHTGDIADEPENKPSA.

Transmembrane regions (helical) follow at residues histidine 4 to valine 24, leucine 26 to leucine 46, alanine 54 to leucine 74, glycine 90 to leucine 110, valine 114 to methionine 134, phenylalanine 149 to leucine 169, leucine 178 to leucine 198, valine 218 to glycine 238, glycine 270 to valine 290, leucine 294 to isoleucine 314, arginine 326 to alanine 346, and alanine 359 to threonine 379. The RCK N-terminal domain maps to glutamine 399–threonine 518. The tract at residues glycine 598–alanine 621 is disordered.

It belongs to the monovalent cation:proton antiporter 2 (CPA2) transporter (TC 2.A.37) family. KefC subfamily. In terms of assembly, homodimer. Interacts with the regulatory subunit KefF.

It is found in the cell inner membrane. Pore-forming subunit of a potassium efflux system that confers protection against electrophiles. Catalyzes K(+)/H(+) antiport. The polypeptide is Glutathione-regulated potassium-efflux system protein KefC (Klebsiella pneumoniae (strain 342)).